A 344-amino-acid polypeptide reads, in one-letter code: Phenylalanine--tRNA ligase alpha subunit (344 aa).

Glutamate 256 is a binding site for Mg(2+).

It belongs to the class-II aminoacyl-tRNA synthetase family. Phe-tRNA synthetase alpha subunit type 1 subfamily. As to quaternary structure, tetramer of two alpha and two beta subunits. It depends on Mg(2+) as a cofactor.

It is found in the cytoplasm. It catalyses the reaction tRNA(Phe) + L-phenylalanine + ATP = L-phenylalanyl-tRNA(Phe) + AMP + diphosphate + H(+). The protein is Phenylalanine--tRNA ligase alpha subunit of Bacillus anthracis (strain CDC 684 / NRRL 3495).